We begin with the raw amino-acid sequence, 434 residues long: ATP-dependent protease ATPase subunit HslU (434 aa).

Residues V18, 60-65 (GVGKTE), D247, E312, and R384 contribute to the ATP site.

Belongs to the ClpX chaperone family. HslU subfamily. In terms of assembly, a double ring-shaped homohexamer of HslV is capped on each side by a ring-shaped HslU homohexamer. The assembly of the HslU/HslV complex is dependent on binding of ATP.

It localises to the cytoplasm. ATPase subunit of a proteasome-like degradation complex; this subunit has chaperone activity. The binding of ATP and its subsequent hydrolysis by HslU are essential for unfolding of protein substrates subsequently hydrolyzed by HslV. HslU recognizes the N-terminal part of its protein substrates and unfolds these before they are guided to HslV for hydrolysis. This chain is ATP-dependent protease ATPase subunit HslU, found in Rhodopseudomonas palustris (strain BisB18).